Reading from the N-terminus, the 152-residue chain is Protein Smg homolog (152 aa).

This sequence belongs to the Smg family.

This Bordetella avium (strain 197N) protein is Protein Smg homolog.